The sequence spans 95 residues: Large ribosomal subunit protein uL23 (95 aa).

Belongs to the universal ribosomal protein uL23 family. As to quaternary structure, part of the 50S ribosomal subunit. Contacts protein L29, and trigger factor when it is bound to the ribosome.

Functionally, one of the early assembly proteins it binds 23S rRNA. One of the proteins that surrounds the polypeptide exit tunnel on the outside of the ribosome. Forms the main docking site for trigger factor binding to the ribosome. The sequence is that of Large ribosomal subunit protein uL23 from Leuconostoc mesenteroides subsp. mesenteroides (strain ATCC 8293 / DSM 20343 / BCRC 11652 / CCM 1803 / JCM 6124 / NCDO 523 / NBRC 100496 / NCIMB 8023 / NCTC 12954 / NRRL B-1118 / 37Y).